The following is a 372-amino-acid chain: MFEFEITSNCSNTAARTGIFHTPNGQVNTPKFMPVGTLATVKGISSKQLTSTGSEMILSNTFHLHLQPGEKLVKESGGIHKFMNWPKPILTDSGGYQVFSLAKLNNISDKGVEFKNPRDGSYVFLSPEKVIQIQMDLGSDVAMAFDHCPPHTANENDIEDSLQRTHSWLQKSVETHQKSNQALFGIVQGGKYPKLREYSAKYTSSFDLPGIAVGGVSVGETVEEIHSVINYVPKFLPIKKPRYLMGIGSLKEISLAVANGFDIFDCVLPTRLGRHGTAFFNDERLNLRNARFKNDFSPIDKTCKCETCKSYSRAYLHHLIRNDEILGLTLISLHNIAHLIRFTNAISTAIRDNCFTNDFAPWKTSSIAHHTW.

The Proton acceptor role is filled by D92. Residues 92 to 96, D146, Q188, and G215 each bind substrate; that span reads DSGGY. The interval 246–252 is RNA binding; it reads GIGSLKE. Residue D265 is the Nucleophile of the active site. An RNA binding; important for wobble base 34 recognition region spans residues 270-274; the sequence is TRLGR. Zn(2+) contacts are provided by C303, C305, C308, and H334.

The protein belongs to the queuine tRNA-ribosyltransferase family. Homodimer. Within each dimer, one monomer is responsible for RNA recognition and catalysis, while the other monomer binds to the replacement base PreQ1. Zn(2+) is required as a cofactor.

The enzyme catalyses 7-aminomethyl-7-carbaguanine + guanosine(34) in tRNA = 7-aminomethyl-7-carbaguanosine(34) in tRNA + guanine. It participates in tRNA modification; tRNA-queuosine biosynthesis. Its function is as follows. Catalyzes the base-exchange of a guanine (G) residue with the queuine precursor 7-aminomethyl-7-deazaguanine (PreQ1) at position 34 (anticodon wobble position) in tRNAs with GU(N) anticodons (tRNA-Asp, -Asn, -His and -Tyr). Catalysis occurs through a double-displacement mechanism. The nucleophile active site attacks the C1' of nucleotide 34 to detach the guanine base from the RNA, forming a covalent enzyme-RNA intermediate. The proton acceptor active site deprotonates the incoming PreQ1, allowing a nucleophilic attack on the C1' of the ribose to form the product. After dissociation, two additional enzymatic reactions on the tRNA convert PreQ1 to queuine (Q), resulting in the hypermodified nucleoside queuosine (7-(((4,5-cis-dihydroxy-2-cyclopenten-1-yl)amino)methyl)-7-deazaguanosine). This Prochlorococcus marinus (strain AS9601) protein is Queuine tRNA-ribosyltransferase.